Consider the following 270-residue polypeptide: MMNRIHAVILDWAGTTVDFGSFAPTQIFVEAFRQAFDVEITLAEARVPMGLGKWQHIEALGKLPAVDARWQAKFSRSMSAADIDAIYAAFMPLQIAKVVDFSSPIAGVIDTIAALRAEGIKIGSCSGYPRAVMERLVPAAAGHGYCPDHWVATDDLAAGGRPGPWMALQNVIALGIDAVAHCVKVDDAAPGISEGLNAGMWTVGLAVSGNEFGATWDAYQTMSKEDVAVRREHAASKLYAAGAHYVVDSLADLPEVIAHINARLAQGERL.

The Nucleophile role is filled by D11. Residues D11 and A13 each contribute to the Mg(2+) site. The active-site Schiff-base intermediate with substrate is the K53. Residue D187 coordinates Mg(2+).

The protein belongs to the HAD-like hydrolase superfamily. PhnX family. Homodimer. Mg(2+) is required as a cofactor.

It carries out the reaction phosphonoacetaldehyde + H2O = acetaldehyde + phosphate + H(+). Involved in phosphonate degradation. This Salmonella choleraesuis (strain SC-B67) protein is Phosphonoacetaldehyde hydrolase.